The primary structure comprises 392 residues: tRNA(Met) cytidine acetate ligase (392 aa).

Residues 7–20, glycine 101, asparagine 162, and 187–188 each bind ATP; these read VVEY…HQLH and RI.

This sequence belongs to the TmcAL family.

Its subcellular location is the cytoplasm. The catalysed reaction is cytidine(34) in elongator tRNA(Met) + acetate + ATP = N(4)-acetylcytidine(34) in elongator tRNA(Met) + AMP + diphosphate. Its function is as follows. Catalyzes the formation of N(4)-acetylcytidine (ac(4)C) at the wobble position of elongator tRNA(Met), using acetate and ATP as substrates. First activates an acetate ion to form acetyladenylate (Ac-AMP) and then transfers the acetyl group to tRNA to form ac(4)C34. In Listeria welshimeri serovar 6b (strain ATCC 35897 / DSM 20650 / CCUG 15529 / CIP 8149 / NCTC 11857 / SLCC 5334 / V8), this protein is tRNA(Met) cytidine acetate ligase.